A 327-amino-acid chain; its full sequence is Deoxynucleotidyltransferase terminal-interacting protein 1 (327 aa).

The span at 1–11 (MGATGDTGGPR) shows a compositional bias: gly residues. Disordered regions lie at residues 1–34 (MGAT…PVLT) and 146–172 (KRGR…LPGH). Residues 55 to 146 (MTTSFTDPAI…RLAHELPGIK (92 aa)) are important for dimerization. Basic and acidic residues predominate over residues 146–161 (KRGRQAEEESHREAPF). A DNA-binding region (a.T hook) is located at residues 157–171 (REAPFPKRGKVGLPG). The Nuclear localization signal signature appears at 162-168 (PKRGKVG). Residues 195–314 (REGPKWDPAR…MRKYMETLRT (120 aa)) are important for DNA and nucleosome binding. The H-T-H motif DNA-binding region spans 214-235 (GSRANKALGMGGTRGRIYIKHP).

In terms of assembly, monomer and homodimer. A minor proportion may form homotrimers. Interacts with ZNF541. Interacts with the terminal deoxynucleotidyltransferase DNTT. Interacts with TRERF1. Identified in a histone deacetylase complex that contains DNTTIP1, HDAC1 and MIDEAS; this complex assembles into a tetramer that contains four copies of each protein chain. Component of a histone deacetylase complex containing DNTTIP1, ZNF541, HDAC1 and HDAC2. Identified in a complex with KCTD19, HDAC1, HDAC2 and ZNF541. Expressed in thymus, bone marrow and spleen.

It localises to the nucleus. Increases DNTT terminal deoxynucleotidyltransferase activity (in vitro). Also acts as a transcriptional regulator, binding to the consensus sequence 5'-GNTGCATG-3' following an AT-tract. Associates with RAB20 promoter and positively regulates its transcription. Binds DNA and nucleosomes; may recruit HDAC1 complexes to nucleosomes or naked DNA. In Rattus norvegicus (Rat), this protein is Deoxynucleotidyltransferase terminal-interacting protein 1 (Dnttip1).